The chain runs to 157 residues: MKILVIHGPNLNMLGRREPEVYGSVTLDEINAILQERAAAVGVTLLTVQSNHEGALIDFLQAEGWDADGIIINPGALTHYGLALRDALAMLKAPIIEVHLSNVYRREPFRHTSVIAPVATGQIAGLGWRGYLLAIEWLLGTRGQGPGTRDQALGTRD.

Tyrosine 22 functions as the Proton acceptor in the catalytic mechanism. Substrate-binding residues include asparagine 73, histidine 79, and aspartate 86. Residue histidine 99 is the Proton donor of the active site. Residues 100-101 (LS) and arginine 110 contribute to the substrate site.

It belongs to the type-II 3-dehydroquinase family. Homododecamer.

The enzyme catalyses 3-dehydroquinate = 3-dehydroshikimate + H2O. Its pathway is metabolic intermediate biosynthesis; chorismate biosynthesis; chorismate from D-erythrose 4-phosphate and phosphoenolpyruvate: step 3/7. Catalyzes a trans-dehydration via an enolate intermediate. The chain is 3-dehydroquinate dehydratase from Roseiflexus castenholzii (strain DSM 13941 / HLO8).